The sequence spans 299 residues: Tyrosine recombinase XerD (299 aa).

In terms of domain architecture, Core-binding (CB) spans 3 to 88; the sequence is QQDNPLIEQF…AMRRLFQYLY (86 aa). The region spanning 109-293 is the Tyr recombinase domain; sequence RLPKDLSEAQ…ATERLRQLHQ (185 aa). Residues arginine 149, lysine 173, histidine 245, arginine 248, and histidine 271 contribute to the active site. Catalysis depends on tyrosine 280, which acts as the O-(3'-phospho-DNA)-tyrosine intermediate.

The protein belongs to the 'phage' integrase family. XerD subfamily. In terms of assembly, forms a cyclic heterotetrameric complex composed of two molecules of XerC and two molecules of XerD, in which XerC interacts with XerD via its C-terminal region, XerD interacts with XerC via its C-terminal region and so on.

Its subcellular location is the cytoplasm. Its activity is regulated as follows. FtsK may regulate the catalytic switch between XerC and XerD in the heterotetrameric complex during the two steps of the recombination process. Site-specific tyrosine recombinase, which acts by catalyzing the cutting and rejoining of the recombining DNA molecules. Binds cooperatively to specific DNA consensus sequences that are separated from XerC binding sites by a short central region, forming the heterotetrameric XerC-XerD complex that recombines DNA substrates. The complex is essential to convert dimers of the bacterial chromosome into monomers to permit their segregation at cell division. It also contributes to the segregational stability of plasmids. In the complex XerD specifically exchanges the bottom DNA strands. This is Tyrosine recombinase XerD from Yersinia pestis.